Reading from the N-terminus, the 946-residue chain is Serine/arginine repetitive matrix protein 1 (946 aa).

The residue at position 1 (methionine 1) is an N-acetylmethionine. Residues 1 to 151 (MDAGFFRGTS…ASLKKQDEDK (151 aa)) are necessary for DNA and RNA-binding. The tract at residues 1-156 (MDAGFFRGTS…QDEDKDKRDK (156 aa)) is necessary for mRNA 3'-end cleavage and cytoplasmic accumulation. Arginine 7 carries the post-translational modification Citrulline. A PWI domain is found at 27–126 (QLKFAECLEK…AGIPSAFLEL (100 aa)). Lysine 127 is covalently cross-linked (Glycyl lysine isopeptide (Lys-Gly) (interchain with G-Cter in SUMO2)). Lysine 140 bears the N6-acetyllysine mark. Positions 142–170 (ASLKKQDEDKDKRDKEEKESSREKRERSR) are enriched in basic and acidic residues. The tract at residues 142–946 (ASLKKQDEDK…MRKAQVSPQS (805 aa)) is disordered. The segment covering 171–207 (SPRRRKSRSPSPRRRSSPVRRERKRSHSRSPRHRTKS) has biased composition (basic residues). The span at 214–234 (PEKKEKSPELPEPSVRMKDSS) shows a compositional bias: basic and acidic residues. Phosphoserine occurs at positions 220 and 227. Residue lysine 231 forms a Glycyl lysine isopeptide (Lys-Gly) (interchain with G-Cter in SUMO1); alternate linkage. A Glycyl lysine isopeptide (Lys-Gly) (interchain with G-Cter in SUMO2); alternate cross-link involves residue lysine 231. 2 positions are modified to phosphoserine: serine 234 and serine 240. Threonine 241 bears the Phosphothreonine mark. The span at 246–273 (KAPKPEPVPEPKEPSPEKNSKKEKEKTR) shows a compositional bias: basic and acidic residues. A Glycyl lysine isopeptide (Lys-Gly) (interchain with G-Cter in SUMO2) cross-link involves residue lysine 249. Serine 260 is modified (phosphoserine). Basic residues-rich tracts occupy residues 274–327 (PRSR…RTPP) and 334–349 (PRHR…RRRS). The tract at residues 298–707 (RRHRSRSRSY…NKRHSPSPRP (410 aa)) is necessary for speckles and matrix localization. Positions 350–366 (SASLSGSSSSSSSSRSR) are enriched in low complexity. Phosphoserine is present on residues serine 387, serine 389, serine 391, and serine 400. Threonine 404 is subject to Phosphothreonine. At serine 412 the chain carries Phosphoserine. Threonine 414 is modified (phosphothreonine). Phosphoserine is present on residues serine 418, serine 427, serine 429, and serine 434. Residues 426–436 (VSVSPGRTSGK) are compositionally biased toward polar residues. Residue lysine 445 forms a Glycyl lysine isopeptide (Lys-Gly) (interchain with G-Cter in SUMO2) linkage. Phosphoserine is present on residues serine 448 and serine 450. Lysine 457 participates in a covalent cross-link: Glycyl lysine isopeptide (Lys-Gly) (interchain with G-Cter in SUMO2). Phosphoserine is present on residues serine 461 and serine 463. A Glycyl lysine isopeptide (Lys-Gly) (interchain with G-Cter in SUMO2) cross-link involves residue lysine 470. Serine 476 is subject to Phosphoserine. Positions 476 to 499 (SVQQRRQYRRQNQQSSSDSGSSST) are enriched in low complexity. Basic and acidic residues predominate over residues 501–516 (EDERPKRSHVKNGEVG). 9 positions are modified to phosphoserine: serine 522, serine 524, serine 526, serine 528, serine 530, serine 561, serine 563, serine 572, and serine 574. The segment covering 555 to 572 (SSRRRRSPSPPPARRRRS) has biased composition (basic residues). A compositionally biased stretch (pro residues) spans 574 to 585 (SPAPPPPPPPPP). Over residues 586-611 (PRRRRSPTPPPRRRTPSPPPRRRSPS) the composition is skewed to basic residues. A phosphothreonine mark is found at threonine 593 and threonine 600. Position 602 is a phosphoserine (serine 602). The segment covering 612 to 624 (PRRYSPPIQRRYS) has biased composition (low complexity). Position 615 is a phosphotyrosine (tyrosine 615). Residues serine 616, serine 624, and serine 626 each carry the phosphoserine modification. Threonine 633 is modified (phosphothreonine). A phosphoserine mark is found at serine 635, serine 645, serine 647, serine 655, and serine 657. Residues 640–655 (PKRRASPSPPPKRRVS) show a composition bias toward basic residues. Positions 668–682 (TKRRSPSLSSKHRKG) are enriched in basic residues. Residues 704-718 (SPRPRAPQTSSPPPV) are compositionally biased toward pro residues. Phosphoserine occurs at positions 713, 714, 723, 725, 731, and 733. Over residues 724–736 (ASPQGRQSPSPST) the composition is skewed to polar residues. Threonine 736 is subject to Phosphothreonine. 10 positions are modified to phosphoserine: serine 779, serine 781, serine 789, serine 793, serine 795, serine 797, serine 810, serine 814, serine 816, and serine 818. A compositionally biased stretch (low complexity) spans 779-800 (SPSPQSVRRVSSSRSVSGSPEP). Residue threonine 819 is modified to Phosphothreonine. Residues serine 822 and serine 832 each carry the phosphoserine modification. The segment covering 833 to 842 (PTPSLSPARN) has biased composition (polar residues). Phosphothreonine is present on threonine 834. 3 positions are modified to phosphoserine: serine 836, serine 838, and serine 843. Over residues 850-875 (KKKKKKKDKKHKKDKKHKKHKKHKKE) the composition is skewed to basic residues. A compositionally biased stretch (low complexity) spans 878–907 (VTIATPATAAPAAVSAATTTSAQEEPAAAP). Residue threonine 913 is modified to Phosphothreonine. Residue serine 915 is modified to Phosphoserine. Residues 924 to 934 (DLERHLREKAL) are compositionally biased toward basic and acidic residues. Serine 943 bears the Phosphoserine mark.

This sequence belongs to the splicing factor SR family. In terms of assembly, identified in the spliceosome C complex. Found in a pre-mRNA splicing complex with SFRS4, SFRS5, SNRP70, SNRPA1, SRRM1 and SRRM2. Component of the minor spliceosome, which splices U12-type introns. Found in a pre-mRNA exonic splicing enhancer (ESE) complex with SNRP70, SNRPA1, SRRM1 and TRA2B/SFRS10. Found in a mRNA splicing-dependent exon junction complex (EJC) with DEK, PRPF8, NCBP1, RBM8A, RNPS1, SRRM1 and ALYREF/THOC4. Interacts with DDX39B, CPSF1, RBM8A, RNPS1, and ALYREF/THOC4. Seems to be a compound of RNA export complexes that are released from speckles in a ATP-dependent manner. Post-translationally, citrullinated by PADI4. Phosphorylated on multiple serine and threonine residues by DYRK3 during the G2-to-M transition, after the nuclear-envelope breakdown. Phosphorylation by DYRK3 promotes disassembly of nuclear speckles.

The protein resides in the nucleus matrix. It localises to the nucleus speckle. Part of pre- and post-splicing multiprotein mRNP complexes. As a component of the minor spliceosome, involved in the splicing of U12-type introns in pre-mRNAs. Involved in numerous pre-mRNA processing events. Promotes constitutive and exonic splicing enhancer (ESE)-dependent splicing activation by bridging together sequence-specific (SR family proteins, SFRS4, SFRS5 and TRA2B/SFRS10) and basal snRNP (SNRP70 and SNRPA1) factors of the spliceosome. Stimulates mRNA 3'-end cleavage independently of the formation of an exon junction complex. Binds both pre-mRNA and spliced mRNA 20-25 nt upstream of exon-exon junctions. Binds RNA and DNA with low sequence specificity and has similar preference for either double- or single-stranded nucleic acid substrates. This is Serine/arginine repetitive matrix protein 1 (Srrm1) from Mus musculus (Mouse).